The chain runs to 95 residues: Opiscorpine-2 (95 aa).

Residues 1–19 (MNNKLTALIFHGLLAIASC) form the signal peptide. Positions 55-95 (EFMCMANMDPTGSCETHCQKASGEKGYCHGTKCKCGVPLSY) constitute a BetaSPN-type CS-alpha/beta domain. 3 disulfide bridges follow: Cys-58/Cys-82, Cys-68/Cys-87, and Cys-72/Cys-89.

The protein belongs to the long chain scorpion toxin family. Class 3 subfamily. Expressed by the venom gland.

It is found in the secreted. Has antimicrobial activity against yeasts and bacteria. This chain is Opiscorpine-2, found in Opistophthalmus carinatus (African yellow leg scorpion).